The following is a 649-amino-acid chain: ABC transporter G family member 5 (649 aa).

In terms of domain architecture, ABC transporter spans 42–284 (VKTEEESLKL…LRSNGLHPPL (243 aa)). 80–87 (GPSGAGKS) is a binding site for ATP. The disordered stretch occupies residues 308–336 (SRRAAHVLTPQTTLQEKRSEDSQGESKSG). An ABC transmembrane type-2 domain is found at 371–581 (EETMILTHRF…PFEGFLINEF (211 aa)). 6 consecutive transmembrane segments (helical) span residues 390-410 (LFAC…LIFH), 425-445 (LFAF…PIFL), 474-494 (LPFL…LVGL), 506-526 (LLIW…SALV), 529-549 (FIVG…FSGY), and 617-637 (VVIM…ILRC).

It belongs to the ABC transporter superfamily. ABCG family. Eye pigment precursor importer (TC 3.A.1.204) subfamily.

The protein localises to the membrane. The polypeptide is ABC transporter G family member 5 (ABCG5) (Arabidopsis thaliana (Mouse-ear cress)).